A 405-amino-acid polypeptide reads, in one-letter code: uncharacterized protein (405 aa).

Transmembrane regions (helical) follow at residues 32 to 52, 53 to 73, 84 to 104, 108 to 128, 150 to 170, 171 to 191, 237 to 257, 260 to 280, 291 to 311, 314 to 334, 352 to 372, and 378 to 398; these read MFVL…VLAG, WLTF…GVLL, IDMI…WLGW, PVVC…IAGI, AVYS…VGWL, GPEA…VCLS, WGAL…VAAG, VVGL…LLAG, IMTA…AEFG, GLTI…VAML, ISIS…GVVI, and AIFV…LSIP.

It belongs to the major facilitator superfamily.

It is found in the cell membrane. This is an uncharacterized protein from Sinorhizobium fredii (strain NBRC 101917 / NGR234).